A 481-amino-acid polypeptide reads, in one-letter code: RuvB-like helicase 2 (481 aa).

76-83 (GPPSTGKT) provides a ligand contact to ATP.

It belongs to the RuvB family. As to quaternary structure, may form heterododecamers with hel-1/rvb1. Component of the SWR1 chromatin remodeling complex, the INO80 chromatin remodeling complex, and of the R2TP complex.

The protein localises to the nucleus. The catalysed reaction is ATP + H2O = ADP + phosphate + H(+). DNA helicase which participates in several chromatin remodeling complexes, including the SWR1 and the INO80 complexes. The SWR1 complex mediates the ATP-dependent exchange of histone H2A for the H2A variant H2A.Z leading to transcriptional regulation of selected genes by chromatin remodeling. The INO80 complex remodels chromatin by shifting nucleosomes and is involved in DNA repair. Also involved in pre-rRNA processing. The polypeptide is RuvB-like helicase 2 (hel-2) (Neurospora crassa (strain ATCC 24698 / 74-OR23-1A / CBS 708.71 / DSM 1257 / FGSC 987)).